A 392-amino-acid chain; its full sequence is Extracellular metalloproteinase 4 (392 aa).

Residues 1–9 constitute a propeptide that is removed on maturation; it reads VHSVVDYVS. Asparagine 176 carries N-linked (GlcNAc...) asparagine glycosylation. Zn(2+) is bound at residue histidine 193. The active site involves glutamate 194. Histidine 197 is a binding site for Zn(2+). N-linked (GlcNAc...) asparagine glycosylation is found at asparagine 359 and asparagine 385.

Belongs to the peptidase M36 family. Zn(2+) serves as cofactor.

The protein localises to the secreted. Functionally, secreted metalloproteinase probably acting as a virulence factor. The sequence is that of Extracellular metalloproteinase 4 (MEP4) from Trichophyton soudanense.